The chain runs to 368 residues: ASTRA-associated protein 1 (368 aa).

WD repeat units lie at residues 12–50 (GHSS…PKCA), 53–91 (AHTK…MTDN), 246–283 (SHSQ…ADDL), 294–333 (TKHC…PLAV), and 336–368 (YHSD…WKLY).

Belongs to the WD repeat ASA1 family. In terms of assembly, component of the ASTRA chromatin-remodeling machinery complex.

The protein localises to the cytoplasm. The protein resides in the nucleus. In terms of biological role, component of the ASTRA complex probably involved in chromatin remodeling. The sequence is that of ASTRA-associated protein 1 (asa1) from Schizosaccharomyces pombe (strain 972 / ATCC 24843) (Fission yeast).